Here is a 375-residue protein sequence, read N- to C-terminus: Putative nuclease YhcG (375 aa).

Interacts with DNA processing enzymes, including the restriction complex HsdMRS, the integrases IntF and IntS, and the recombinase PinE.

May be a nuclease involved in DNA recombination and repair. The sequence is that of Putative nuclease YhcG (yhcG) from Escherichia coli (strain K12).